Here is a 456-residue protein sequence, read N- to C-terminus: Bifunctional protein GlmU (456 aa).

Positions 1–229 are pyrophosphorylase; it reads MLNSAMSVVI…ISETDGVNNR (229 aa). UDP-N-acetyl-alpha-D-glucosamine is bound by residues 11–14, K25, Q76, 81–82, 103–105, G140, E154, N169, and N227; these read LAAG, GT, and YGD. D105 is a binding site for Mg(2+). N227 contributes to the Mg(2+) binding site. The tract at residues 230 to 250 is linker; it reads LQLSRLERIYQAEQAEKLLLS. The N-acetyltransferase stretch occupies residues 251–456; sequence GVMLRDPARF…QGWQRPVKKK (206 aa). UDP-N-acetyl-alpha-D-glucosamine-binding residues include R333 and K351. H363 acts as the Proton acceptor in catalysis. Residues Y366 and N377 each contribute to the UDP-N-acetyl-alpha-D-glucosamine site. Acetyl-CoA contacts are provided by residues A380, 386 to 387, S405, A423, and R440; that span reads NY.

This sequence in the N-terminal section; belongs to the N-acetylglucosamine-1-phosphate uridyltransferase family. The protein in the C-terminal section; belongs to the transferase hexapeptide repeat family. Homotrimer. The cofactor is Mg(2+).

It is found in the cytoplasm. The catalysed reaction is alpha-D-glucosamine 1-phosphate + acetyl-CoA = N-acetyl-alpha-D-glucosamine 1-phosphate + CoA + H(+). It carries out the reaction N-acetyl-alpha-D-glucosamine 1-phosphate + UTP + H(+) = UDP-N-acetyl-alpha-D-glucosamine + diphosphate. Its pathway is nucleotide-sugar biosynthesis; UDP-N-acetyl-alpha-D-glucosamine biosynthesis; N-acetyl-alpha-D-glucosamine 1-phosphate from alpha-D-glucosamine 6-phosphate (route II): step 2/2. It functions in the pathway nucleotide-sugar biosynthesis; UDP-N-acetyl-alpha-D-glucosamine biosynthesis; UDP-N-acetyl-alpha-D-glucosamine from N-acetyl-alpha-D-glucosamine 1-phosphate: step 1/1. The protein operates within bacterial outer membrane biogenesis; LPS lipid A biosynthesis. Functionally, catalyzes the last two sequential reactions in the de novo biosynthetic pathway for UDP-N-acetylglucosamine (UDP-GlcNAc). The C-terminal domain catalyzes the transfer of acetyl group from acetyl coenzyme A to glucosamine-1-phosphate (GlcN-1-P) to produce N-acetylglucosamine-1-phosphate (GlcNAc-1-P), which is converted into UDP-GlcNAc by the transfer of uridine 5-monophosphate (from uridine 5-triphosphate), a reaction catalyzed by the N-terminal domain. The chain is Bifunctional protein GlmU from Salmonella paratyphi A (strain ATCC 9150 / SARB42).